The primary structure comprises 118 residues: Small ribosomal subunit protein uS13 (118 aa).

Residues 99–118 are disordered; that stretch reads GQRTRTNARTRKGPRKAIKK.

Belongs to the universal ribosomal protein uS13 family. Part of the 30S ribosomal subunit. Forms a loose heterodimer with protein S19. Forms two bridges to the 50S subunit in the 70S ribosome.

In terms of biological role, located at the top of the head of the 30S subunit, it contacts several helices of the 16S rRNA. In the 70S ribosome it contacts the 23S rRNA (bridge B1a) and protein L5 of the 50S subunit (bridge B1b), connecting the 2 subunits; these bridges are implicated in subunit movement. Contacts the tRNAs in the A and P-sites. This chain is Small ribosomal subunit protein uS13, found in Xylella fastidiosa (strain M23).